We begin with the raw amino-acid sequence, 251 residues long: Small ribosomal subunit protein uS2 (251 aa).

It belongs to the universal ribosomal protein uS2 family.

In Deinococcus deserti (strain DSM 17065 / CIP 109153 / LMG 22923 / VCD115), this protein is Small ribosomal subunit protein uS2.